Reading from the N-terminus, the 373-residue chain is L-threonine 3-dehydrogenase, mitochondrial (373 aa).

Residues 62 to 67 (GGLGQL), 88 to 90 (DIR), 106 to 107 (NI), Tyr195, Lys199, and Ile225 each bind NAD(+). The active-site Proton donor/acceptor is Tyr195.

Belongs to the NAD(P)-dependent epimerase/dehydratase family. As to quaternary structure, homodimer.

Its subcellular location is the mitochondrion. It catalyses the reaction L-threonine + NAD(+) = (2S)-2-amino-3-oxobutanoate + NADH + H(+). It functions in the pathway amino-acid degradation; L-threonine degradation via oxydo-reductase pathway; glycine from L-threonine: step 1/2. Its function is as follows. Catalyzes the NAD(+)-dependent oxidation of L-threonine to 2-amino-3-ketobutyrate, mediating L-threonine catabolism. The polypeptide is L-threonine 3-dehydrogenase, mitochondrial (Mus musculus (Mouse)).